The chain runs to 483 residues: Triacylglycerol lipase ptl3 (483 aa).

A PNPLA domain is found at 141-340 (LILSGGGTFG…DNDIPHAKLT (200 aa)). A GXGXXG motif is present at residues 145–150 (GGGTFG). Residues 172–176 (GSSAG) carry the GXSXG motif. The active-site Nucleophile is the Ser174. Asp327 acts as the Proton acceptor in catalysis.

The protein resides in the cytoplasm. It is found in the lipid droplet. It catalyses the reaction a triacylglycerol + H2O = a diacylglycerol + a fatty acid + H(+). Its function is as follows. Lipid particle-localized triacylglycerol (TAG) lipase. The lipid droplet/particle is a lipid storage compartment which serves as a depot of energy and building blocks for membrane lipid biosynthesis. Involved in the mobilization of the non-polar storage lipids triacylglycerols (TAGs) from lipid particles by hydrolysis of TAGs, releasing and supplying specific fatty acids to the appropriate metabolic pathways. This is Triacylglycerol lipase ptl3 (ptl3) from Schizosaccharomyces pombe (strain 972 / ATCC 24843) (Fission yeast).